Here is a 311-residue protein sequence, read N- to C-terminus: Delta(1)-pyrroline-2-carboxylate reductase 2 (311 aa).

The protein belongs to the ornithine cyclodeaminase/mu-crystallin family.

The enzyme catalyses L-proline + NAD(+) = 1-pyrroline-2-carboxylate + NADH + H(+). It carries out the reaction L-proline + NADP(+) = 1-pyrroline-2-carboxylate + NADPH + H(+). In terms of biological role, catalyzes the reduction of Delta(1)-pyrroline-2-carboxylate (Pyr2C) to L-proline, using preferentially NADPH over NADH as the electron donor. May be involved in a degradation pathway that converts trans-3-hydroxy-L-proline (t3LHyp) to L-proline. In Burkholderia ambifaria (strain ATCC BAA-244 / DSM 16087 / CCUG 44356 / LMG 19182 / AMMD) (Burkholderia cepacia (strain AMMD)), this protein is Delta(1)-pyrroline-2-carboxylate reductase 2.